Consider the following 172-residue polypeptide: RNA silencing suppressor p19 (172 aa).

The span at 1–20 shows a compositional bias: basic and acidic residues; the sequence is MERVIQGNDAREQANGERWD. Residues 1-37 are disordered; that stretch reads MERVIQGNDAREQANGERWDGGSGGTTSGFKLPDESP.

Belongs to the tombusvirus protein p19 family. As to quaternary structure, homodimer.

Viral suppressor of RNA silencing which binds specifically to silencing RNAs (siRNAs). Acts as a molecular caliper to specifically select siRNAs based on the length of the duplex region of the RNA. The polypeptide is RNA silencing suppressor p19 (Cynara cardunculus var. scolymus (Globe artichoke)).